The sequence spans 497 residues: Glutamyl-tRNA(Gln) amidotransferase subunit A (497 aa).

Catalysis depends on charge relay system residues K75 and S150. The Acyl-ester intermediate role is filled by S174.

The protein belongs to the amidase family. GatA subfamily. As to quaternary structure, heterotrimer of A, B and C subunits.

It carries out the reaction L-glutamyl-tRNA(Gln) + L-glutamine + ATP + H2O = L-glutaminyl-tRNA(Gln) + L-glutamate + ADP + phosphate + H(+). Its function is as follows. Allows the formation of correctly charged Gln-tRNA(Gln) through the transamidation of misacylated Glu-tRNA(Gln) in organisms which lack glutaminyl-tRNA synthetase. The reaction takes place in the presence of glutamine and ATP through an activated gamma-phospho-Glu-tRNA(Gln). The sequence is that of Glutamyl-tRNA(Gln) amidotransferase subunit A from Paraburkholderia phymatum (strain DSM 17167 / CIP 108236 / LMG 21445 / STM815) (Burkholderia phymatum).